Reading from the N-terminus, the 143-residue chain is Large ribosomal subunit protein uL11 (143 aa).

Belongs to the universal ribosomal protein uL11 family. Part of the ribosomal stalk of the 50S ribosomal subunit. Interacts with L10 and the large rRNA to form the base of the stalk. L10 forms an elongated spine to which L12 dimers bind in a sequential fashion forming a multimeric L10(L12)X complex. Post-translationally, one or more lysine residues are methylated.

Its function is as follows. Forms part of the ribosomal stalk which helps the ribosome interact with GTP-bound translation factors. The sequence is that of Large ribosomal subunit protein uL11 from Rhizorhabdus wittichii (strain DSM 6014 / CCUG 31198 / JCM 15750 / NBRC 105917 / EY 4224 / RW1) (Sphingomonas wittichii).